Consider the following 379-residue polypeptide: Dual-specificity RNA methyltransferase RlmN (379 aa).

E95 serves as the catalytic Proton acceptor. Residues 101-345 (EETRGTLCVS…TTVRKTRGDD (245 aa)) enclose the Radical SAM core domain. The cysteines at positions 108 and 350 are disulfide-linked. [4Fe-4S] cluster-binding residues include C115, C119, and C122. S-adenosyl-L-methionine contacts are provided by residues 176–177 (GE), S208, 230–232 (SLH), and N307. C350 (S-methylcysteine intermediate) is an active-site residue.

It belongs to the radical SAM superfamily. RlmN family. It depends on [4Fe-4S] cluster as a cofactor.

Its subcellular location is the cytoplasm. It catalyses the reaction adenosine(2503) in 23S rRNA + 2 reduced [2Fe-2S]-[ferredoxin] + 2 S-adenosyl-L-methionine = 2-methyladenosine(2503) in 23S rRNA + 5'-deoxyadenosine + L-methionine + 2 oxidized [2Fe-2S]-[ferredoxin] + S-adenosyl-L-homocysteine. The enzyme catalyses adenosine(37) in tRNA + 2 reduced [2Fe-2S]-[ferredoxin] + 2 S-adenosyl-L-methionine = 2-methyladenosine(37) in tRNA + 5'-deoxyadenosine + L-methionine + 2 oxidized [2Fe-2S]-[ferredoxin] + S-adenosyl-L-homocysteine. In terms of biological role, specifically methylates position 2 of adenine 2503 in 23S rRNA and position 2 of adenine 37 in tRNAs. m2A2503 modification seems to play a crucial role in the proofreading step occurring at the peptidyl transferase center and thus would serve to optimize ribosomal fidelity. The polypeptide is Dual-specificity RNA methyltransferase RlmN (Burkholderia vietnamiensis (strain G4 / LMG 22486) (Burkholderia cepacia (strain R1808))).